The following is a 268-amino-acid chain: Tryptophan synthase alpha chain (268 aa).

Active-site proton acceptor residues include Glu-49 and Asp-60.

This sequence belongs to the TrpA family. As to quaternary structure, tetramer of two alpha and two beta chains.

It carries out the reaction (1S,2R)-1-C-(indol-3-yl)glycerol 3-phosphate + L-serine = D-glyceraldehyde 3-phosphate + L-tryptophan + H2O. Its pathway is amino-acid biosynthesis; L-tryptophan biosynthesis; L-tryptophan from chorismate: step 5/5. The alpha subunit is responsible for the aldol cleavage of indoleglycerol phosphate to indole and glyceraldehyde 3-phosphate. The polypeptide is Tryptophan synthase alpha chain (Xanthomonas axonopodis pv. citri (strain 306)).